Reading from the N-terminus, the 186-residue chain is dCTP deaminase (186 aa).

Residue 107 to 112 (KSTYAR) participates in dCTP binding. The active-site Proton donor/acceptor is the Glu133. DCTP-binding residues include Gln152, Tyr166, and Gln176.

It belongs to the dCTP deaminase family. Homotrimer.

The catalysed reaction is dCTP + H2O + H(+) = dUTP + NH4(+). Its pathway is pyrimidine metabolism; dUMP biosynthesis; dUMP from dCTP (dUTP route): step 1/2. Functionally, catalyzes the deamination of dCTP to dUTP. This Campylobacter jejuni subsp. jejuni serotype O:6 (strain 81116 / NCTC 11828) protein is dCTP deaminase.